A 540-amino-acid polypeptide reads, in one-letter code: Glucose-6-phosphate isomerase (540 aa).

Residue Glu-350 is the Proton donor of the active site. Catalysis depends on residues His-381 and Lys-503.

This sequence belongs to the GPI family.

The protein localises to the cytoplasm. The catalysed reaction is alpha-D-glucose 6-phosphate = beta-D-fructose 6-phosphate. Its pathway is carbohydrate biosynthesis; gluconeogenesis. It participates in carbohydrate degradation; glycolysis; D-glyceraldehyde 3-phosphate and glycerone phosphate from D-glucose: step 2/4. Catalyzes the reversible isomerization of glucose-6-phosphate to fructose-6-phosphate. This chain is Glucose-6-phosphate isomerase, found in Paraburkholderia xenovorans (strain LB400).